A 169-amino-acid polypeptide reads, in one-letter code: MLRSEKPVAVEDIVNIYKESPSVIITHYHGLTVSQVSSLREALKSKEVGFKVVKNTLAKIAAKHTGLDSITDLFAGPSAIVYSKEPVEMARLVVNFANSNDNLKIIGGIVDNHILDTYAIKELAKLPSLHELRGKIVGLLQAPATKVVGVLQATSSSIARVIHAHAIKH.

It belongs to the universal ribosomal protein uL10 family. As to quaternary structure, part of the ribosomal stalk of the 50S ribosomal subunit. The N-terminus interacts with L11 and the large rRNA to form the base of the stalk. The C-terminus forms an elongated spine to which L12 dimers bind in a sequential fashion forming a multimeric L10(L12)X complex.

Forms part of the ribosomal stalk, playing a central role in the interaction of the ribosome with GTP-bound translation factors. This chain is Large ribosomal subunit protein uL10, found in Rickettsia typhi (strain ATCC VR-144 / Wilmington).